A 505-amino-acid polypeptide reads, in one-letter code: Apolipoprotein N-acyltransferase (505 aa).

6 helical membrane-spanning segments follow: residues 23 to 43 (LLAL…AVLY), 58 to 78 (GWWF…VSMN), 85 to 105 (PLLA…FFAL), 125 to 145 (LCFA…LTGF), 162 to 182 (LAPL…AALL), and 192 to 212 (PSFL…GLAL). Residues 230 to 469 (IQGNVEQDLK…QAVLYGEVVP (240 aa)) enclose the CN hydrolase domain. Residue Glu269 is the Proton acceptor of the active site. Lys329 is an active-site residue. Residue Cys381 is the Nucleophile of the active site. Residues 482-502 (WPLAIVCALLLGWALLAGRIA) form a helical membrane-spanning segment.

The protein belongs to the CN hydrolase family. Apolipoprotein N-acyltransferase subfamily.

The protein resides in the cell inner membrane. It catalyses the reaction N-terminal S-1,2-diacyl-sn-glyceryl-L-cysteinyl-[lipoprotein] + a glycerophospholipid = N-acyl-S-1,2-diacyl-sn-glyceryl-L-cysteinyl-[lipoprotein] + a 2-acyl-sn-glycero-3-phospholipid + H(+). It functions in the pathway protein modification; lipoprotein biosynthesis (N-acyl transfer). Its function is as follows. Catalyzes the phospholipid dependent N-acylation of the N-terminal cysteine of apolipoprotein, the last step in lipoprotein maturation. This chain is Apolipoprotein N-acyltransferase, found in Pseudomonas putida (strain ATCC 47054 / DSM 6125 / CFBP 8728 / NCIMB 11950 / KT2440).